Reading from the N-terminus, the 158-residue chain is Transcription elongation factor GreA (158 aa).

Residues 4-75 (EKTYPMTQEG…TQLENMIRNA (72 aa)) adopt a coiled-coil conformation.

Belongs to the GreA/GreB family.

In terms of biological role, necessary for efficient RNA polymerase transcription elongation past template-encoded arresting sites. The arresting sites in DNA have the property of trapping a certain fraction of elongating RNA polymerases that pass through, resulting in locked ternary complexes. Cleavage of the nascent transcript by cleavage factors such as GreA or GreB allows the resumption of elongation from the new 3'terminus. GreA releases sequences of 2 to 3 nucleotides. The sequence is that of Transcription elongation factor GreA from Bacillus anthracis (strain A0248).